Consider the following 1183-residue polypeptide: DNA-directed RNA polymerase subunit beta (1183 aa).

This sequence belongs to the RNA polymerase beta chain family. As to quaternary structure, the RNAP catalytic core consists of 2 alpha, 1 beta, 1 beta' and 1 omega subunit. When a sigma factor is associated with the core the holoenzyme is formed, which can initiate transcription.

The catalysed reaction is RNA(n) + a ribonucleoside 5'-triphosphate = RNA(n+1) + diphosphate. Its function is as follows. DNA-dependent RNA polymerase catalyzes the transcription of DNA into RNA using the four ribonucleoside triphosphates as substrates. This chain is DNA-directed RNA polymerase subunit beta, found in Staphylococcus aureus (strain Mu50 / ATCC 700699).